The sequence spans 434 residues: Histidinol dehydrogenase (434 aa).

NAD(+) contacts are provided by tyrosine 130, glutamine 191, and asparagine 214. Residues serine 237, glutamine 259, and histidine 262 each contribute to the substrate site. Residues glutamine 259 and histidine 262 each contribute to the Zn(2+) site. Residues glutamate 327 and histidine 328 each act as proton acceptor in the active site. Residues histidine 328, aspartate 361, glutamate 415, and histidine 420 each contribute to the substrate site. Aspartate 361 provides a ligand contact to Zn(2+). Histidine 420 lines the Zn(2+) pocket.

It belongs to the histidinol dehydrogenase family. Requires Zn(2+) as cofactor.

The enzyme catalyses L-histidinol + 2 NAD(+) + H2O = L-histidine + 2 NADH + 3 H(+). Its pathway is amino-acid biosynthesis; L-histidine biosynthesis; L-histidine from 5-phospho-alpha-D-ribose 1-diphosphate: step 9/9. Its function is as follows. Catalyzes the sequential NAD-dependent oxidations of L-histidinol to L-histidinaldehyde and then to L-histidine. This is Histidinol dehydrogenase from Rhizobium meliloti (strain 1021) (Ensifer meliloti).